Reading from the N-terminus, the 508-residue chain is Ribonuclease Y (508 aa).

Residues 2–22 (IITALIAIAVGFLIGYLARKI) form a helical membrane-spanning segment. The region spanning 198–261 (TVSVVTLPND…EVARIALEKL (64 aa)) is the KH domain. One can recognise an HD domain in the interval 324–417 (VLKHSIEVAH…VQAADAISAA (94 aa)).

This sequence belongs to the RNase Y family.

It is found in the cell membrane. In terms of biological role, endoribonuclease that initiates mRNA decay. This chain is Ribonuclease Y, found in Thermoanaerobacter pseudethanolicus (strain ATCC 33223 / 39E) (Clostridium thermohydrosulfuricum).